The following is a 124-amino-acid chain: MAADLGQIPDVDIDSDGVFKYVLIRVHLAEPSGDPAKECKEIVRGYKWAEYHADIYDKVSGELQRNGYDCECLGGGRISHQSQDRKIHVYGYSMGYGRAQHSVSTEKIKAKYPDYEVTWADDGY.

Lys20 is a binding site for substrate. The active-site Proton acceptor is the His52. Ser93–Gly95 lines the substrate pocket.

This sequence belongs to the janus family. Monomer.

The protein resides in the cytoplasm. The catalysed reaction is N(pros)-phospho-L-histidyl-[protein] + H2O = L-histidyl-[protein] + phosphate. It carries out the reaction N(tele)-phospho-L-histidyl-[protein] + H2O = L-histidyl-[protein] + phosphate. In terms of biological role, exhibits phosphohistidine phosphatase activity. This chain is 14 kDa phosphohistidine phosphatase (Phpt1), found in Mus musculus (Mouse).